Consider the following 451-residue polypeptide: Phosphoglucosamine mutase (451 aa).

Residue Ser102 is the Phosphoserine intermediate of the active site. Mg(2+) is bound by residues Ser102, Asp243, Asp245, and Asp247. Phosphoserine is present on Ser102.

It belongs to the phosphohexose mutase family. Mg(2+) is required as a cofactor. Activated by phosphorylation.

The catalysed reaction is alpha-D-glucosamine 1-phosphate = D-glucosamine 6-phosphate. Catalyzes the conversion of glucosamine-6-phosphate to glucosamine-1-phosphate. This Brucella anthropi (strain ATCC 49188 / DSM 6882 / CCUG 24695 / JCM 21032 / LMG 3331 / NBRC 15819 / NCTC 12168 / Alc 37) (Ochrobactrum anthropi) protein is Phosphoglucosamine mutase.